We begin with the raw amino-acid sequence, 289 residues long: MDVFAFFNLNELAFGLSKLPMFPYFDMAHYIISVMSLREQPGALCVSQRSPLACWFSSMLYCFGGAVLSALMLADAPVAPLSNTTNLLLATLMWYLVFYCPLDVVYSLASLLPLRLVLTAMKEVTRTWKVLSGVSQAGSKYSDALFVMVAVGWAKGAGGGLISNFEQLVRGVWKPETNELLKMSYPTKVTLLGAVVFSLQQCRYLPIQTHHLTFIYTLFTVTNKTRMMLLGSSSHPLSSLESFLYKTLFVRPLTDLSAEHTHSKHNGSVPEPTTAQTHTKEAEASKKTN.

The Lumenal segment spans residues 1–18 (MDVFAFFNLNELAFGLSK). A helical membrane pass occupies residues 19-36 (LPMFPYFDMAHYIISVMS). Residues 37-49 (LREQPGALCVSQR) lie on the Cytoplasmic side of the membrane. The chain crosses the membrane as a helical span at residues 50–73 (SPLACWFSSMLYCFGGAVLSALML). Over 74-85 (ADAPVAPLSNTT) the chain is Lumenal. The chain crosses the membrane as a helical span at residues 86–103 (NLLLATLMWYLVFYCPLD). The Cytoplasmic portion of the chain corresponds to 104–107 (VVYS). A helical transmembrane segment spans residues 108-125 (LASLLPLRLVLTAMKEVT). Residues lysine 122 and arginine 126 each contribute to the a 1,2-diacyl-sn-glycero-3-phospho-(1D-myo-inositol-4,5-bisphosphate) site. Over 126-144 (RTWKVLSGVSQAGSKYSDA) the chain is Lumenal. Residues 145–162 (LFVMVAVGWAKGAGGGLI) traverse the membrane as a helical segment. Residues 163-183 (SNFEQLVRGVWKPETNELLKM) are Cytoplasmic-facing. A helical membrane pass occupies residues 184–201 (SYPTKVTLLGAVVFSLQQ). Residues 202–210 (CRYLPIQTH) lie on the Lumenal side of the membrane. A helical transmembrane segment spans residues 211–230 (HLTFIYTLFTVTNKTRMMLL). The Cytoplasmic segment spans residues 231–289 (GSSSHPLSSLESFLYKTLFVRPLTDLSAEHTHSKHNGSVPEPTTAQTHTKEAEASKKTN). The tract at residues 260–289 (HTHSKHNGSVPEPTTAQTHTKEAEASKKTN) is disordered. Positions 278–289 (HTKEAEASKKTN) are enriched in basic and acidic residues.

Belongs to the TMEM38 family. As to quaternary structure, homotrimer; conformation seems to be controled by binding to diacylglycerol (DAG).

Its subcellular location is the endoplasmic reticulum membrane. The enzyme catalyses K(+)(in) = K(+)(out). Its activity is regulated as follows. Channel activity is activated by increased cytosolic Ca(2+) levels and blocked by luminal high Ca(2+) levels. Its function is as follows. Intracellular monovalent cation channel required for maintenance of rapid intracellular calcium release. Acts as a potassium counter-ion channel that functions in synchronization with calcium release from intracellular stores. Activated by increased cytosolic Ca(2+) levels. The protein is Trimeric intracellular cation channel type B (tmem38b) of Danio rerio (Zebrafish).